Consider the following 122-residue polypeptide: Large ribosomal subunit protein uL18 (122 aa).

The protein belongs to the universal ribosomal protein uL18 family. In terms of assembly, part of the 50S ribosomal subunit; part of the 5S rRNA/L5/L18/L25 subcomplex. Contacts the 5S and 23S rRNAs.

Functionally, this is one of the proteins that bind and probably mediate the attachment of the 5S RNA into the large ribosomal subunit, where it forms part of the central protuberance. In Geobacter sp. (strain M21), this protein is Large ribosomal subunit protein uL18.